Reading from the N-terminus, the 283-residue chain is uncharacterized protein (283 aa).

A run of 3 helical transmembrane segments spans residues 24 to 44, 64 to 84, and 96 to 116; these read LFGY…GMFI, TIAG…TLIA, and VIAI…GSLS.

The protein belongs to the MscS (TC 1.A.23) family.

The protein resides in the cell membrane. This is an uncharacterized protein from Buchnera aphidicola subsp. Schizaphis graminum (strain Sg).